We begin with the raw amino-acid sequence, 455 residues long: 2-oxoisovalerate dehydrogenase subunit alpha, mitochondrial (455 aa).

The transit peptide at 1-55 (MQGSAKMAMAVAVAVARVWRPSRGLGRTGLPLLRLLGARGLARFHPHRWQQQQHF) directs the protein to the mitochondrion. The thiamine diphosphate site is built by tyrosine 168 and arginine 169. Residue serine 216 coordinates K(+). Serine 217 contacts thiamine diphosphate. K(+) contacts are provided by proline 218, threonine 221, and glutamine 222. A Mg(2+)-binding site is contributed by glutamate 248. Thiamine diphosphate contacts are provided by glycine 249, alanine 250, and arginine 275. Residues asparagine 277 and tyrosine 279 each contribute to the Mg(2+) site. Residue histidine 346 participates in thiamine diphosphate binding. Serine 347 carries the phosphoserine; by BCKDK modification. The residue at position 348 (threonine 348) is a Phosphothreonine. 2 positions are modified to phosphoserine: serine 349 and serine 357. An N6-acetyllysine; alternate modification is found at lysine 366. Position 366 is an N6-succinyllysine; alternate (lysine 366). The residue at position 390 (lysine 390) is an N6-succinyllysine.

This sequence belongs to the BCKDHA family. Heterotetramer of 2 alpha/BCKDHA and 2 beta chains/BCKDHB that forms the branched-chain alpha-keto acid decarboxylase (E1) component of the BCKD complex. The branched-chain alpha-ketoacid dehydrogenase is a large complex composed of three major building blocks E1, E2 and E3. It is organized around E2, a 24-meric cubic core composed of DBT, to which are associated 6 to 12 copies of E1, and approximately 6 copies of the dehydrogenase E3, a DLD dimer. Interacts with PPM1K. It depends on thiamine diphosphate as a cofactor. The cofactor is Mg(2+). Post-translationally, phosphorylated at Ser-347 by BCKDK and dephosphorylated by protein phosphatase PPM1K. As to expression, expressed in kidney (at protein level).

It is found in the mitochondrion matrix. The enzyme catalyses N(6)-[(R)-lipoyl]-L-lysyl-[protein] + 3-methyl-2-oxobutanoate + H(+) = N(6)-[(R)-S(8)-2-methylpropanoyldihydrolipoyl]-L-lysyl-[protein] + CO2. In terms of biological role, together with BCKDHB forms the heterotetrameric E1 subunit of the mitochondrial branched-chain alpha-ketoacid dehydrogenase (BCKD) complex. The BCKD complex catalyzes the multi-step oxidative decarboxylation of alpha-ketoacids derived from the branched-chain amino-acids valine, leucine and isoleucine producing CO2 and acyl-CoA which is subsequently utilized to produce energy. The E1 subunit catalyzes the first step with the decarboxylation of the alpha-ketoacid forming an enzyme-product intermediate. A reductive acylation mediated by the lipoylamide cofactor of E2 extracts the acyl group from the E1 active site for the next step of the reaction. This is 2-oxoisovalerate dehydrogenase subunit alpha, mitochondrial (BCKDHA) from Bos taurus (Bovine).